A 157-amino-acid polypeptide reads, in one-letter code: 6,7-dimethyl-8-ribityllumazine synthase (157 aa).

5-amino-6-(D-ribitylamino)uracil-binding positions include tryptophan 27, 59-61, and 81-83; these read AIE and VVI. Residue 86 to 87 participates in (2S)-2-hydroxy-3-oxobutyl phosphate binding; it reads ET. Histidine 89 serves as the catalytic Proton donor. Asparagine 114 is a 5-amino-6-(D-ribitylamino)uracil binding site. Arginine 128 is a binding site for (2S)-2-hydroxy-3-oxobutyl phosphate.

Belongs to the DMRL synthase family. Homopentamer.

The catalysed reaction is (2S)-2-hydroxy-3-oxobutyl phosphate + 5-amino-6-(D-ribitylamino)uracil = 6,7-dimethyl-8-(1-D-ribityl)lumazine + phosphate + 2 H2O + H(+). Its pathway is cofactor biosynthesis; riboflavin biosynthesis; riboflavin from 2-hydroxy-3-oxobutyl phosphate and 5-amino-6-(D-ribitylamino)uracil: step 1/2. Catalyzes the formation of 6,7-dimethyl-8-ribityllumazine by condensation of 5-amino-6-(D-ribitylamino)uracil with 3,4-dihydroxy-2-butanone 4-phosphate. This is the penultimate step in the biosynthesis of riboflavin. The polypeptide is 6,7-dimethyl-8-ribityllumazine synthase (Mycolicibacterium vanbaalenii (strain DSM 7251 / JCM 13017 / BCRC 16820 / KCTC 9966 / NRRL B-24157 / PYR-1) (Mycobacterium vanbaalenii)).